The primary structure comprises 390 residues: NADH-quinone oxidoreductase subunit D (390 aa).

The protein belongs to the complex I 49 kDa subunit family. As to quaternary structure, NDH-1 is composed of 14 different subunits. Subunits NuoB, C, D, E, F, and G constitute the peripheral sector of the complex.

The protein resides in the cell inner membrane. The catalysed reaction is a quinone + NADH + 5 H(+)(in) = a quinol + NAD(+) + 4 H(+)(out). NDH-1 shuttles electrons from NADH, via FMN and iron-sulfur (Fe-S) centers, to quinones in the respiratory chain. The immediate electron acceptor for the enzyme in this species is believed to be ubiquinone. Couples the redox reaction to proton translocation (for every two electrons transferred, four hydrogen ions are translocated across the cytoplasmic membrane), and thus conserves the redox energy in a proton gradient. This Geotalea uraniireducens (strain Rf4) (Geobacter uraniireducens) protein is NADH-quinone oxidoreductase subunit D.